A 105-amino-acid chain; its full sequence is UPF0060 membrane protein Ajs_1326 (105 aa).

4 consecutive transmembrane segments (helical) span residues 4-24, 30-50, 60-80, and 82-102; these read FALF…PYLW, SAWL…LLTL, AAYG…VDGI, and PTAW…LIMF.

Belongs to the UPF0060 family.

It localises to the cell inner membrane. This is UPF0060 membrane protein Ajs_1326 from Acidovorax sp. (strain JS42).